The chain runs to 350 residues: tRNA uridine(34) hydroxylase (350 aa).

Positions 146-240 (DDPDALFIDM…YARKAREQGL (95 aa)) constitute a Rhodanese domain. Catalysis depends on Cys-200, which acts as the Cysteine persulfide intermediate.

This sequence belongs to the TrhO family.

It carries out the reaction uridine(34) in tRNA + AH2 + O2 = 5-hydroxyuridine(34) in tRNA + A + H2O. Catalyzes oxygen-dependent 5-hydroxyuridine (ho5U) modification at position 34 in tRNAs, the first step in 5-carboxymethoxyuridine (cmo5U) biosynthesis. May be part of an alternate pathway, which is able to bypass cmo5U biogenesis in a subset of tRNAs under aerobic conditions. The polypeptide is tRNA uridine(34) hydroxylase (Escherichia coli (strain SE11)).